Reading from the N-terminus, the 271-residue chain is Shikimate dehydrogenase (NADP(+)) (271 aa).

Shikimate is bound by residues 19-21 (SLS) and threonine 65. Lysine 69 serves as the catalytic Proton acceptor. Glutamate 81 provides a ligand contact to NADP(+). The shikimate site is built by asparagine 90 and aspartate 105. Residues 128 to 132 (GAGGA), 150 to 155 (NRTIEK), and isoleucine 211 contribute to the NADP(+) site. A shikimate-binding site is contributed by tyrosine 213. Glycine 234 lines the NADP(+) pocket.

Belongs to the shikimate dehydrogenase family. Homodimer.

It carries out the reaction shikimate + NADP(+) = 3-dehydroshikimate + NADPH + H(+). It functions in the pathway metabolic intermediate biosynthesis; chorismate biosynthesis; chorismate from D-erythrose 4-phosphate and phosphoenolpyruvate: step 4/7. Involved in the biosynthesis of the chorismate, which leads to the biosynthesis of aromatic amino acids. Catalyzes the reversible NADPH linked reduction of 3-dehydroshikimate (DHSA) to yield shikimate (SA). This Pyrococcus furiosus (strain ATCC 43587 / DSM 3638 / JCM 8422 / Vc1) protein is Shikimate dehydrogenase (NADP(+)).